The following is a 445-amino-acid chain: MTCDKHTAQTIGKGDLVVVVGAGRSGMAAARLLHRMGARVRLLERNADGVPADFVRWAAEAGVEIATGDHAPTQFEGARAVVPSPGMAVSKLRPLLAQGPDAPEIMAEMELAWRQLDGEPVLAVTGTSGKTTTVSLCAAMLRAQGLSVFLGGNIGTPLSEYVLSVAHGGADGQGRADVLVIEISSFQLQACTTFRPRVAMLLNISENHLDYHADMAEYIDAKFRLFRCMEEGDLAIFGQGVRDLVAARDLKPRTLFFDAAARRFPRTCLLGGHNQANIEAAWQACREFGVTPEAAEKAVADFAPMEHRLEAVAERNGVLWVNDSKCTTVEALRVALQAFDRPVVLMVGGKFKGGDLASLLPLLCGRVRAVVGFGASREHFEGAWMGQGDFPMSWHPALEPAVAEAAALARPGDAVVMAPATSSFDLFANYKERGHAFRRAVEALP.

ATP is bound at residue 126 to 132; it reads GTSGKTT.

The protein belongs to the MurCDEF family.

It is found in the cytoplasm. The enzyme catalyses UDP-N-acetyl-alpha-D-muramoyl-L-alanine + D-glutamate + ATP = UDP-N-acetyl-alpha-D-muramoyl-L-alanyl-D-glutamate + ADP + phosphate + H(+). It functions in the pathway cell wall biogenesis; peptidoglycan biosynthesis. Cell wall formation. Catalyzes the addition of glutamate to the nucleotide precursor UDP-N-acetylmuramoyl-L-alanine (UMA). This chain is UDP-N-acetylmuramoylalanine--D-glutamate ligase, found in Nitratidesulfovibrio vulgaris (strain DSM 19637 / Miyazaki F) (Desulfovibrio vulgaris).